The primary structure comprises 320 residues: ATP-dependent 6-phosphofructokinase (320 aa).

G12 is an ATP binding site. 22 to 26 (RGVVR) is an ADP binding site. ATP-binding positions include 73–74 (RF) and 103–106 (GDGS). Mg(2+) is bound at residue D104. 126 to 128 (TID) contacts substrate. The active-site Proton acceptor is D128. R155 contributes to the ADP binding site. Residues R163 and 170-172 (MGR) each bind substrate. Residues 186 to 188 (GCE), K212, and 214 to 216 (KKH) contribute to the ADP site. Substrate-binding positions include E223, R244, and 250 to 253 (HIQR).

It belongs to the phosphofructokinase type A (PFKA) family. ATP-dependent PFK group I subfamily. Prokaryotic clade 'B1' sub-subfamily. Homotetramer. Mg(2+) is required as a cofactor.

Its subcellular location is the cytoplasm. The enzyme catalyses beta-D-fructose 6-phosphate + ATP = beta-D-fructose 1,6-bisphosphate + ADP + H(+). The protein operates within carbohydrate degradation; glycolysis; D-glyceraldehyde 3-phosphate and glycerone phosphate from D-glucose: step 3/4. Allosterically activated by ADP and other diphosphonucleosides, and allosterically inhibited by phosphoenolpyruvate. In terms of biological role, catalyzes the phosphorylation of D-fructose 6-phosphate to fructose 1,6-bisphosphate by ATP, the first committing step of glycolysis. The chain is ATP-dependent 6-phosphofructokinase from Aliivibrio fischeri (strain ATCC 700601 / ES114) (Vibrio fischeri).